We begin with the raw amino-acid sequence, 184 residues long: MGLIDVLKSFKSPSGREIRILLLGLDNAGKTTILKQLSSEDVQHVTPTKGFNVKTVAAMGDIRLNVWDIGGQRSIRPYWSNYYENIDTLIFVIDSNDKKRFDEMNIELGELLDEEKLRKVPVLIFANKQDLVTAASSEEITRKLNLDLLRDRTWHIQACSALKNEGINDGITWVASNLKPASKK.

Gly2 carries N-myristoyl glycine lipidation. Residues 24–31 (GLDNAGKT), 68–72 (DIGGQ), and 127–130 (NKQD) contribute to the GTP site.

Belongs to the small GTPase superfamily. Arf family.

Its subcellular location is the golgi apparatus. In terms of biological role, GTP-binding protein that may be involved in protein trafficking; may modulate vesicle budding and uncoating within the Golgi apparatus. This chain is ADP-ribosylation factor-like protein 3 (arl-3), found in Caenorhabditis elegans.